A 504-amino-acid polypeptide reads, in one-letter code: Facilitated trehalose transporter Tret1 (504 aa).

The Cytoplasmic portion of the chain corresponds to Met-1–Tyr-39. Residues Ile-40–Ala-60 form a helical membrane-spanning segment. The Extracellular segment spans residues Ser-61–Ser-87. N-linked (GlcNAc...) asparagine glycosylation is present at Asn-73. A helical membrane pass occupies residues Trp-88–Ile-108. The Cytoplasmic segment spans residues Glu-109–Thr-120. The helical transmembrane segment at Ala-121–Leu-141 threads the bilayer. The Extracellular segment spans residues Ala-142–Ala-145. Residues Leu-146 to Val-166 traverse the membrane as a helical segment. At Gln-167–Arg-171 the chain is on the cytoplasmic side. Residues Gly-172–Ala-192 traverse the membrane as a helical segment. Over Gly-193–Ser-199 the chain is Extracellular. Asn-197 is a glycosylation site (N-linked (GlcNAc...) asparagine). The helical transmembrane segment at Gly-200–Pro-220 threads the bilayer. Residues Glu-221 to Pro-283 lie on the Cytoplasmic side of the membrane. Residues Leu-284–Phe-304 traverse the membrane as a helical segment. At Tyr-305 to Asn-320 the chain is on the extracellular side. A helical transmembrane segment spans residues Leu-321–Ile-341. At Asp-342–Lys-347 the chain is on the cytoplasmic side. The helical transmembrane segment at Ile-348–Phe-368 threads the bilayer. The Extracellular portion of the chain corresponds to Tyr-369–Ser-387. A helical membrane pass occupies residues Phe-388 to Gly-408. The Cytoplasmic segment spans residues Glu-409–Thr-424. A helical transmembrane segment spans residues Gly-425–Ile-445. At Gly-446–His-448 the chain is on the extracellular side. The helical transmembrane segment at Gly-449–Val-469 threads the bilayer. Residues Pro-470 to Met-504 are Cytoplasmic-facing.

Belongs to the major facilitator superfamily. Sugar transporter (TC 2.A.1.1) family. Trehalose transporter subfamily. Highest expression in the fat body. Not expressed in other tissues including the midgut, muscle, and integuments after 24 hours of dehydration.

It localises to the cell membrane. In terms of biological role, high-capacity facilitative transporter for trehalose, required to induce anhydrobiosis. Anhydrobiotic larvae can survive almost complete dehydration. Does not transport maltose, sucrose or lactose. Mediates the bidirectional transfer of trehalose. Responsible for the transport of trehalose synthesized in the fat body and the incorporation of trehalose into other tissues that require a carbon source, thereby regulating trehalose levels in the hemolymph. This is Facilitated trehalose transporter Tret1 from Polypedilum vanderplanki (Sleeping chironomid midge).